The following is a 1024-amino-acid chain: Beta-galactosidase (1024 aa).

Positions 103 and 202 each coordinate substrate. Position 202 (D202) interacts with Na(+). E417, H419, and E462 together coordinate Mg(2+). Substrate contacts are provided by residues E462 and 538–541 (EYAH). Catalysis depends on E462, which acts as the Proton donor. E538 functions as the Nucleophile in the catalytic mechanism. Mg(2+) is bound at residue N598. Na(+) contacts are provided by F602 and N605. Substrate is bound by residues N605 and W1000.

It belongs to the glycosyl hydrolase 2 family. In terms of assembly, homotetramer. Mg(2+) serves as cofactor. Na(+) is required as a cofactor.

The enzyme catalyses Hydrolysis of terminal non-reducing beta-D-galactose residues in beta-D-galactosides.. This is Beta-galactosidase from Escherichia coli O6:K15:H31 (strain 536 / UPEC).